The following is a 513-amino-acid chain: 2,3-bisphosphoglycerate-independent phosphoglycerate mutase (513 aa).

Mn(2+)-binding residues include Asp-13 and Ser-63. The active-site Phosphoserine intermediate is the Ser-63. Substrate-binding positions include His-124, Arg-154–Asp-155, Arg-186, Arg-192, Arg-262–Arg-265, and Lys-335. Residues Asp-402, His-406, Asp-443, His-444, and His-462 each coordinate Mn(2+).

It belongs to the BPG-independent phosphoglycerate mutase family. Monomer. It depends on Mn(2+) as a cofactor.

It catalyses the reaction (2R)-2-phosphoglycerate = (2R)-3-phosphoglycerate. It functions in the pathway carbohydrate degradation; glycolysis; pyruvate from D-glyceraldehyde 3-phosphate: step 3/5. Catalyzes the interconversion of 2-phosphoglycerate and 3-phosphoglycerate. The protein is 2,3-bisphosphoglycerate-independent phosphoglycerate mutase of Shewanella amazonensis (strain ATCC BAA-1098 / SB2B).